We begin with the raw amino-acid sequence, 347 residues long: NHL repeat-containing protein 3 (347 aa).

The N-terminal stretch at 1-25 (MARFWVCVAGAGFFLAFLVLHSRFC) is a signal peptide. The N-linked (GlcNAc...) asparagine glycan is linked to Asn-32. One copy of the NHL 1 repeat lies at 47 to 93 (RLDVGWPKHPEYFTGTTFCVAVDSLNGLVYIGQRGDNIPKILVFTED). N-linked (GlcNAc...) asparagine glycosylation occurs at Asn-101. NHL repeat units follow at residues 150-196 (TPGK…LSQD) and 200-243 (LWLH…FDKD). N-linked (GlcNAc...) asparagine glycosylation is found at Asn-206 and Asn-278. One copy of the NHL 4 repeat lies at 294–338 (GECSVISTIQLADQVLPHLLEVDRKTGAVYVAEIGAKQVQKYVPL).

It is found in the secreted. This is NHL repeat-containing protein 3 (NHLRC3) from Homo sapiens (Human).